Here is a 242-residue protein sequence, read N- to C-terminus: MFHKLLNKSEILAYDKKYVNNYIINVENLSFFYSKEKVIDDISFQVKFGEIVTILGPNGGGKTTLIRILVGIYRNYIGVIKYAKNFIIGYLPQHFSVNSLIPMTVKYFLNSSYTKSKRKLKLSDVLKDINIEKILDRQMSEISHGELQLVLLARCLMLNPDIIILDEPVSCMDVNAKDSFYKLINKLISIYNLSVIMTSHDLHFVMSNSYRVICINRSIYCEGSPSEIVKNEKFLKMFSSYA.

Residues 24-241 (INVENLSFFY…EKFLKMFSSY (218 aa)) enclose the ABC transporter domain. Residue 56-63 (GPNGGGKT) coordinates ATP.

Belongs to the ABC transporter superfamily. Zinc importer (TC 3.A.1.15.5) family. As to quaternary structure, the complex is composed of two ATP-binding proteins (ZnuC), two transmembrane proteins (ZnuB) and a solute-binding protein (ZnuA).

It is found in the cell inner membrane. It carries out the reaction Zn(2+)(out) + ATP(in) + H2O(in) = Zn(2+)(in) + ADP(in) + phosphate(in) + H(+)(in). Functionally, part of the ABC transporter complex ZnuABC involved in zinc import. Responsible for energy coupling to the transport system. This is Zinc import ATP-binding protein ZnuC from Ehrlichia chaffeensis (strain ATCC CRL-10679 / Arkansas).